The primary structure comprises 726 residues: Probable alpha-galactosidase G (726 aa).

N-linked (GlcNAc...) asparagine glycosylation is found at Asn23, Asn166, and Asn456. The active-site Nucleophile is Asp485. The active-site Proton donor is the Asp547. 2 N-linked (GlcNAc...) asparagine glycosylation sites follow: Asn657 and Asn673.

It belongs to the glycosyl hydrolase 36 family. Homotetramer. It depends on Mg(2+) as a cofactor. NAD(+) is required as a cofactor.

It is found in the secreted. It carries out the reaction Hydrolysis of terminal, non-reducing alpha-D-galactose residues in alpha-D-galactosides, including galactose oligosaccharides, galactomannans and galactolipids.. Functionally, hydrolyzes a variety of simple alpha-D-galactoside as well as more complex molecules such as oligosaccharides and polysaccharides. Not active on paranitrophenyl-alpha-galactoside and raffinose. In Emericella nidulans (strain FGSC A4 / ATCC 38163 / CBS 112.46 / NRRL 194 / M139) (Aspergillus nidulans), this protein is Probable alpha-galactosidase G (aglG).